The primary structure comprises 375 residues: Filamin-binding LIM protein 1 (375 aa).

A filamin-binding region spans residues 1–69; that stretch reads MASKPEKRVA…KTWTPSGKTN (69 aa). The tract at residues 40–176 is disordered; that stretch reads ARPWEMLPTK…PPPEEPVTLP (137 aa). The segment covering 60-83 has biased composition (polar residues); it reads KTWTPSGKTNASLSGVTPQLSNGG. Composition is skewed to pro residues over residues 98-107 and 133-144; these read LPPPPPPPSA and LPPPPPPPPPQA. LIM zinc-binding domains follow at residues 183–244, 245–302, and 303–372; these read DVCG…TLEK, CGKC…RKFA, and PVCS…RSAA. The FERMT2-binding stretch occupies residues 278–375; sequence ISDESFALDS…HLKRSAAGCC (98 aa).

In terms of assembly, interacts with FERMT2, FLNA, FLNB and FLNC. Interacts with NKX2-5.

It localises to the cell junction. The protein resides in the focal adhesion. It is found in the cytoplasm. The protein localises to the cytoskeleton. Its subcellular location is the stress fiber. Serves as an anchoring site for cell-ECM adhesion proteins and filamin-containing actin filaments. Is implicated in cell shape modulation (spreading) and motility. May participate in the regulation of filamin-mediated cross-linking and stabilization of actin filaments. May also regulate the assembly of filamin-containing signaling complexes that control actin assembly. Promotes dissociation of FLNA from ITGB3 and ITGB7. Promotes activation of integrins and regulates integrin-mediated cell-cell adhesion. This Mus musculus (Mouse) protein is Filamin-binding LIM protein 1 (Fblim1).